The following is a 465-amino-acid chain: UDP-glycosyltransferase TURAN (465 aa).

Residues 1–75 lie on the Cytoplasmic side of the membrane; that stretch reads MGKRGRACVV…FIQYFPKILY (75 aa). Residues 76–96 traverse the membrane as a helical segment; that stretch reads PVTLLLKAFIQFTMLLWFLFV. Residues 97–465 are Lumenal-facing; sequence KVPAPDIFLV…TQVVSQIADS (369 aa). An N-linked (GlcNAc...) asparagine glycan is attached at Asn238.

The protein belongs to the glycosyltransferase group 1 family. Glycosyltransferase 33 subfamily.

Its subcellular location is the endoplasmic reticulum membrane. It participates in protein modification; protein glycosylation. Functionally, required for pollen tube (PT) growth and integrity by affecting the stability of the pollen-specific ANX1 and ANX2 proteins. Involved in protein N-glycosylation in the endoplasmic reticulum (ER), especially in the female gametophyte. Mediates PT reception in synergids through protein glycosylation. The sequence is that of UDP-glycosyltransferase TURAN from Arabidopsis thaliana (Mouse-ear cress).